A 204-amino-acid chain; its full sequence is NADH-ubiquinone oxidoreductase chain 6 (204 aa).

Helical transmembrane passes span 5-25 (IFLFYLFSIFALISSLMVIGL), 29-49 (VHSVLFLILVFCNVAGLLLLL), 56-76 (FMLIIVYVGAIAVLFLFVVMM), 91-111 (LWPIGILTFVILLSQFFSSFY), and 151-171 (LLFLICGLILLVAMIGVIVLT).

This sequence belongs to the complex I subunit 6 family.

It localises to the mitochondrion membrane. The catalysed reaction is a ubiquinone + NADH + 5 H(+)(in) = a ubiquinol + NAD(+) + 4 H(+)(out). Its function is as follows. Core subunit of the mitochondrial membrane respiratory chain NADH dehydrogenase (Complex I) that is believed to belong to the minimal assembly required for catalysis. Complex I functions in the transfer of electrons from NADH to the respiratory chain. The immediate electron acceptor for the enzyme is believed to be ubiquinone. This Chondrus crispus (Carrageen Irish moss) protein is NADH-ubiquinone oxidoreductase chain 6 (ND6).